We begin with the raw amino-acid sequence, 146 residues long: U-scoloptoxin(16)-Er1a (146 aa).

The signal sequence occupies residues 1–26 (MNTVSVVQFLAVGCAVFVLYGRGVFA).

This sequence belongs to the scoloptoxin-16 family. Contains 4 disulfide bonds. Expressed by the venom gland.

It localises to the secreted. This is U-scoloptoxin(16)-Er1a from Ethmostigmus rubripes (Giant centipede).